The sequence spans 270 residues: NADPH-dependent 7-cyano-7-deazaguanine reductase (270 aa).

79-81 (IES) is a substrate binding site. Position 81–82 (81–82 (SK)) interacts with NADPH. Catalysis depends on cysteine 177, which acts as the Thioimide intermediate. Aspartate 184 acts as the Proton donor in catalysis. 216-217 (HE) contributes to the substrate binding site. 245 to 246 (RG) provides a ligand contact to NADPH.

The protein belongs to the GTP cyclohydrolase I family. QueF type 2 subfamily. In terms of assembly, homodimer.

The protein localises to the cytoplasm. It catalyses the reaction 7-aminomethyl-7-carbaguanine + 2 NADP(+) = 7-cyano-7-deazaguanine + 2 NADPH + 3 H(+). Its pathway is tRNA modification; tRNA-queuosine biosynthesis. Functionally, catalyzes the NADPH-dependent reduction of 7-cyano-7-deazaguanine (preQ0) to 7-aminomethyl-7-deazaguanine (preQ1). The chain is NADPH-dependent 7-cyano-7-deazaguanine reductase from Acinetobacter baumannii (strain AB307-0294).